Reading from the N-terminus, the 456-residue chain is ATP synthase subunit beta 1 (456 aa).

Residue 152-159 (GGAGVGKS) participates in ATP binding.

Belongs to the ATPase alpha/beta chains family. F-type ATPases have 2 components, CF(1) - the catalytic core - and CF(0) - the membrane proton channel. CF(1) has five subunits: alpha(3), beta(3), gamma(1), delta(1), epsilon(1). CF(0) has three main subunits: a(1), b(2) and c(9-12). The alpha and beta chains form an alternating ring which encloses part of the gamma chain. CF(1) is attached to CF(0) by a central stalk formed by the gamma and epsilon chains, while a peripheral stalk is formed by the delta and b chains.

It is found in the cell membrane. It carries out the reaction ATP + H2O + 4 H(+)(in) = ADP + phosphate + 5 H(+)(out). In terms of biological role, produces ATP from ADP in the presence of a proton gradient across the membrane. The catalytic sites are hosted primarily by the beta subunits. This chain is ATP synthase subunit beta 1, found in Listeria innocua serovar 6a (strain ATCC BAA-680 / CLIP 11262).